A 415-amino-acid polypeptide reads, in one-letter code: Queuine tRNA-ribosyltransferase accessory subunit 2 (415 aa).

Residues Cys-351, Cys-353, Cys-356, and His-382 each coordinate Zn(2+).

It belongs to the queuine tRNA-ribosyltransferase family. QTRT2 subfamily. In terms of assembly, heterodimer of a catalytic subunit QTRT1 and an accessory subunit QTRT2. It depends on Zn(2+) as a cofactor.

It localises to the cytoplasm. The protein localises to the mitochondrion outer membrane. Non-catalytic subunit of the queuine tRNA-ribosyltransferase (TGT) that catalyzes the base-exchange of a guanine (G) residue with queuine (Q) at position 34 (anticodon wobble position) in tRNAs with GU(N) anticodons (tRNA-Asp, -Asn, -His and -Tyr), resulting in the hypermodified nucleoside queuosine (7-(((4,5-cis-dihydroxy-2-cyclopenten-1-yl)amino)methyl)-7-deazaguanosine). This Pongo abelii (Sumatran orangutan) protein is Queuine tRNA-ribosyltransferase accessory subunit 2.